The following is a 461-amino-acid chain: Photosystem II CP43 reaction center protein (461 aa).

A propeptide spanning residues 1–2 (ME) is cleaved from the precursor. N-acetylthreonine is present on threonine 3. Threonine 3 is subject to Phosphothreonine. 5 helical membrane passes run 57–81 (LFEV…PHLA), 122–143 (LIGP…KDKN), 166–188 (KAMY…RVIT), 243–263 (KPWA…LSYS), and 279–300 (WFNN…ASQS). Glutamate 355 lines the [CaMn4O5] cluster pocket. A helical transmembrane segment spans residues 435-459 (RARAAAAGFEKGIDRDNEPVLSMKP).

This sequence belongs to the PsbB/PsbC family. PsbC subfamily. In terms of assembly, PSII is composed of 1 copy each of membrane proteins PsbA, PsbB, PsbC, PsbD, PsbE, PsbF, PsbH, PsbI, PsbJ, PsbK, PsbL, PsbM, PsbT, PsbX, PsbY, PsbZ, Psb30/Ycf12, at least 3 peripheral proteins of the oxygen-evolving complex and a large number of cofactors. It forms dimeric complexes. Binds multiple chlorophylls and provides some of the ligands for the Ca-4Mn-5O cluster of the oxygen-evolving complex. It may also provide a ligand for a Cl- that is required for oxygen evolution. PSII binds additional chlorophylls, carotenoids and specific lipids. is required as a cofactor.

The protein localises to the plastid. Its subcellular location is the chloroplast thylakoid membrane. One of the components of the core complex of photosystem II (PSII). It binds chlorophyll and helps catalyze the primary light-induced photochemical processes of PSII. PSII is a light-driven water:plastoquinone oxidoreductase, using light energy to abstract electrons from H(2)O, generating O(2) and a proton gradient subsequently used for ATP formation. The protein is Photosystem II CP43 reaction center protein of Tupiella akineta (Green alga).